The primary structure comprises 130 residues: Glycine cleavage system H protein (130 aa).

The Lipoyl-binding domain occupies 24–106 (TLTIGITDHA…YGEGWIMRIR (83 aa)). Lysine 65 is subject to N6-lipoyllysine. The tract at residues 111-130 (DDLEQLLDPEDYQDLVADEE) is disordered.

It belongs to the GcvH family. As to quaternary structure, the glycine cleavage system is composed of four proteins: P, T, L and H. (R)-lipoate serves as cofactor.

Its function is as follows. The glycine cleavage system catalyzes the degradation of glycine. The H protein shuttles the methylamine group of glycine from the P protein to the T protein. The polypeptide is Glycine cleavage system H protein (Alkalilimnicola ehrlichii (strain ATCC BAA-1101 / DSM 17681 / MLHE-1)).